Here is a 198-residue protein sequence, read N- to C-terminus: FMN-dependent NADH:quinone oxidoreductase (198 aa).

Residues S10 and 16–18 (SIS) contribute to the FMN site.

The protein belongs to the azoreductase type 1 family. In terms of assembly, homodimer. FMN is required as a cofactor.

It carries out the reaction 2 a quinone + NADH + H(+) = 2 a 1,4-benzosemiquinone + NAD(+). The enzyme catalyses N,N-dimethyl-1,4-phenylenediamine + anthranilate + 2 NAD(+) = 2-(4-dimethylaminophenyl)diazenylbenzoate + 2 NADH + 2 H(+). Its function is as follows. Quinone reductase that provides resistance to thiol-specific stress caused by electrophilic quinones. Also exhibits azoreductase activity. Catalyzes the reductive cleavage of the azo bond in aromatic azo compounds to the corresponding amines. This chain is FMN-dependent NADH:quinone oxidoreductase, found in Mycoplasmopsis pulmonis (strain UAB CTIP) (Mycoplasma pulmonis).